The following is a 203-amino-acid chain: Holliday junction branch migration complex subunit RuvA (203 aa).

The tract at residues 1–64 (MIGRLRGIII…EDAQLLYGFN (64 aa)) is domain I. A domain II region spans residues 65 to 142 (NKQERTLFKE…KGLHGDLFTP (78 aa)). The tract at residues 143–154 (AADLVLTSPASP) is flexible linker. Positions 155 to 203 (ATNDAEQEAVAALVALGYKPQEASRMVSKIARPDASSETLIREALRAAL) are domain III.

It belongs to the RuvA family. As to quaternary structure, homotetramer. Forms an RuvA(8)-RuvB(12)-Holliday junction (HJ) complex. HJ DNA is sandwiched between 2 RuvA tetramers; dsDNA enters through RuvA and exits via RuvB. An RuvB hexamer assembles on each DNA strand where it exits the tetramer. Each RuvB hexamer is contacted by two RuvA subunits (via domain III) on 2 adjacent RuvB subunits; this complex drives branch migration. In the full resolvosome a probable DNA-RuvA(4)-RuvB(12)-RuvC(2) complex forms which resolves the HJ.

The protein localises to the cytoplasm. In terms of biological role, the RuvA-RuvB-RuvC complex processes Holliday junction (HJ) DNA during genetic recombination and DNA repair, while the RuvA-RuvB complex plays an important role in the rescue of blocked DNA replication forks via replication fork reversal (RFR). RuvA specifically binds to HJ cruciform DNA, conferring on it an open structure. The RuvB hexamer acts as an ATP-dependent pump, pulling dsDNA into and through the RuvAB complex. HJ branch migration allows RuvC to scan DNA until it finds its consensus sequence, where it cleaves and resolves the cruciform DNA. This is Holliday junction branch migration complex subunit RuvA from Escherichia coli O9:H4 (strain HS).